We begin with the raw amino-acid sequence, 306 residues long: MLNEFINFETISRSDWQRFYQEDQVSLTPEELESIRSLNDKIDVQEVRDIYLPLINLIRIYHRAAEDLTFSKGIFLQKAQANRPFIIGISGSVAVGKSTTSRLLQLLLQRTFPKAKVDMVTTDGFLFPNQVLIDKGILNRKGFPESYDMPLLLNFLDTVKNGGDVNIPVYSHEIYDIVPGLTQKISQPNFLIVEGINVFQNPINQRLYMSDYFDFSIYIDADVKNIKTWYLERFQTLLELARKDENNYYHRFTKFTKEEALSLAQKTWKEINLVNLENYIEPTRNRAELILHKGDSHKIDLIHLKK.

91 to 98 (GSVAVGKS) contacts ATP.

Belongs to the prokaryotic pantothenate kinase family.

The protein localises to the cytoplasm. It carries out the reaction (R)-pantothenate + ATP = (R)-4'-phosphopantothenate + ADP + H(+). The protein operates within cofactor biosynthesis; coenzyme A biosynthesis; CoA from (R)-pantothenate: step 1/5. The polypeptide is Pantothenate kinase (Streptococcus thermophilus (strain CNRZ 1066)).